Here is a 246-residue protein sequence, read N- to C-terminus: Protein DEHYDRATION-INDUCED 19 homolog 3 (246 aa).

The disordered stretch occupies residues 185 to 230 (ERSKAPVPIPDDTSIHKDTPAQPWESRIDSSLTSEEREQKRKQATD). Over residues 218–229 (SEEREQKRKQAT) the composition is skewed to basic and acidic residues.

The protein belongs to the Di19 family.

The sequence is that of Protein DEHYDRATION-INDUCED 19 homolog 3 (DI19-3) from Oryza sativa subsp. japonica (Rice).